The chain runs to 90 residues: MTRWWRSRYICRSQCSNVKNSTCSQQILYIHLLILSYTTITKSFFKTLNHHQKSMFKVIRLKYIFEINSCISHPSILDLYVLKNTILLIL.

The chain is Protein A54 from Homo sapiens (Human).